Here is a 468-residue protein sequence, read N- to C-terminus: Chromosomal replication initiator protein DnaA (468 aa).

The interval 1–90 is domain I, interacts with DnaA modulators; it reads MTQEKWGLLC…NSPMRPARAA (90 aa). The segment at 91 to 126 is domain II; it reads RPAAAAAAAAAAVEAPQVSAPRATDTSDVLDGLQAA. The segment at 127-348 is domain III, AAA+ region; that stretch reads PLDPRFTFDS…GALTRLFAFA (222 aa). Positions 171, 173, 174, and 175 each coordinate ATP. A domain IV, binds dsDNA region spans residues 349 to 468; sequence SLVGREIDME…VEMLRRALEA (120 aa).

It belongs to the DnaA family. As to quaternary structure, oligomerizes as a right-handed, spiral filament on DNA at oriC.

The protein localises to the cytoplasm. Its function is as follows. Plays an essential role in the initiation and regulation of chromosomal replication. ATP-DnaA binds to the origin of replication (oriC) to initiate formation of the DNA replication initiation complex once per cell cycle. Binds the DnaA box (a 9 base pair repeat at the origin) and separates the double-stranded (ds)DNA. Forms a right-handed helical filament on oriC DNA; dsDNA binds to the exterior of the filament while single-stranded (ss)DNA is stabiized in the filament's interior. The ATP-DnaA-oriC complex binds and stabilizes one strand of the AT-rich DNA unwinding element (DUE), permitting loading of DNA polymerase. After initiation quickly degrades to an ADP-DnaA complex that is not apt for DNA replication. Binds acidic phospholipids. This chain is Chromosomal replication initiator protein DnaA, found in Ruegeria pomeroyi (strain ATCC 700808 / DSM 15171 / DSS-3) (Silicibacter pomeroyi).